Consider the following 290-residue polypeptide: MDKIIKSIAQSGAFRAYVLDSTETVALAQEKHNTLSSSTVALGRTLIANQILAANQKGDSKITVKVIGDSSFGHIISVADTKGHVKGYIQNTGVDIKKTATGEVLVGPFMGNGHFVTIIDYGTGNPYASTTPLITGEIGEDFAYYLTESEQTPSAIGLNVLLDENDKVKVAGGFMVQVLPGASEEEIARYEKRLQEMPAISHLLASKNHVDALLEAIYGDEPYKRLSEEPLSFQCDCSRERFEAALMTLPKADLQAMIDEDKGAEIVCQFCGTKYQFNESDLEALINDKA.

2 disulfide bridges follow: Cys-235/Cys-237 and Cys-268/Cys-271.

It belongs to the HSP33 family. In terms of processing, under oxidizing conditions two disulfide bonds are formed involving the reactive cysteines. Under reducing conditions zinc is bound to the reactive cysteines and the protein is inactive.

It is found in the cytoplasm. Redox regulated molecular chaperone. Protects both thermally unfolding and oxidatively damaged proteins from irreversible aggregation. Plays an important role in the bacterial defense system toward oxidative stress. The sequence is that of 33 kDa chaperonin from Streptococcus pyogenes serotype M4 (strain MGAS10750).